A 213-amino-acid polypeptide reads, in one-letter code: Orotate phosphoribosyltransferase (213 aa).

K26 contributes to the 5-phospho-alpha-D-ribose 1-diphosphate binding site. 34–35 (FF) serves as a coordination point for orotate. Residues 72–73 (YK), R99, K100, K103, H105, and 124–132 (DDVITAGTA) contribute to the 5-phospho-alpha-D-ribose 1-diphosphate site. The orotate site is built by T128 and R156.

The protein belongs to the purine/pyrimidine phosphoribosyltransferase family. PyrE subfamily. In terms of assembly, homodimer. It depends on Mg(2+) as a cofactor.

The enzyme catalyses orotidine 5'-phosphate + diphosphate = orotate + 5-phospho-alpha-D-ribose 1-diphosphate. Its pathway is pyrimidine metabolism; UMP biosynthesis via de novo pathway; UMP from orotate: step 1/2. Catalyzes the transfer of a ribosyl phosphate group from 5-phosphoribose 1-diphosphate to orotate, leading to the formation of orotidine monophosphate (OMP). The protein is Orotate phosphoribosyltransferase of Photorhabdus laumondii subsp. laumondii (strain DSM 15139 / CIP 105565 / TT01) (Photorhabdus luminescens subsp. laumondii).